A 194-amino-acid chain; its full sequence is MAATAPKAGGSAPEAAGSAEAPLQYSLLLQYLVGDKRQPRLLEPGSLGGIPSPAKSEEQKMIERAMESCAFKAVLACVGGFVLGGAFGIFTAGIDTNVGFDPKDPYRTPTAKEVLKDMGQRGMSYAKNFAIVGAMFSCTECLVESYRGKSDWKNSVISGCITGGAIGFRAGVKAGAIGCGGFAAFSAAIDYYLR.

2 disulfide bridges follow: cysteine 69–cysteine 141 and cysteine 160–cysteine 179. Transmembrane regions (helical) follow at residues 74-94 (VLAC…TAGI), 123-143 (MSYA…ECLV), and 170-190 (AGVK…AAID).

Belongs to the Tim17/Tim22/Tim23 family. As to quaternary structure, component of the TIM22 complex, whose core is composed of TIMM22, associated with peripheral protein FXC1/TIMM10B and the 70 kDa heterohexamer. In most cases, the 70 kDa complex is composed of TIMM9 and TIMM10 (TIMM10A or TIMM10B). A small fraction of the 70 kDa complex is composed of TIMM8 (TIMM8A/DDP1 or TIMM8B/DDP2) and TIMM13. The TIM22 complex also contains AGK and TIMM29. Interacts directly with TIMM9, TIMM10A and FXC1/TIMM10B. Interacts (when oxidized) with TIMM29; interaction is direct. Disulfide bonds promote efficient assembly of the TIM22 complex.

It is found in the mitochondrion inner membrane. Functionally, essential core component of the TIM22 complex, a complex that mediates the import and insertion of multi-pass transmembrane proteins into the mitochondrial inner membrane. In the TIM22 complex, it constitutes the voltage-activated and signal-gated channel. Forms a twin-pore translocase that uses the membrane potential as external driving force in 2 voltage-dependent steps. This chain is Mitochondrial import inner membrane translocase subunit Tim22 (Timm22), found in Mus musculus (Mouse).